The sequence spans 131 residues: Leptin receptor gene-related protein (131 aa).

Helical transmembrane passes span 7–27 (LVGL…GCAL), 32–52 (VYWP…HFIA), 69–89 (LAYF…IILA), and 100–120 (GLVL…FLVF).

Belongs to the OB-RGRP/VPS55 family.

Its subcellular location is the golgi apparatus membrane. It localises to the endosome membrane. Functionally, involved in protein trafficking. May be involved in the down-regulation of membrane protein levels. This Gallus gallus (Chicken) protein is Leptin receptor gene-related protein (LEPROT).